We begin with the raw amino-acid sequence, 181 residues long: Adenine phosphoribosyltransferase (181 aa).

Belongs to the purine/pyrimidine phosphoribosyltransferase family. Homodimer.

Its subcellular location is the cytoplasm. The enzyme catalyses AMP + diphosphate = 5-phospho-alpha-D-ribose 1-diphosphate + adenine. It functions in the pathway purine metabolism; AMP biosynthesis via salvage pathway; AMP from adenine: step 1/1. Functionally, catalyzes a salvage reaction resulting in the formation of AMP, that is energically less costly than de novo synthesis. This Aliivibrio salmonicida (strain LFI1238) (Vibrio salmonicida (strain LFI1238)) protein is Adenine phosphoribosyltransferase.